Reading from the N-terminus, the 177-residue chain is MSRTKSTTICIVRRDGKTVIAGDGQVTLGNSVMKASARKIRKLYEGKIVVGFAGSAADGLALMERLEEKLNKYRGNLLRAAVELAKDWRTDKFLRRLEAVMVAADKEIMLLISGNGDVIEPDEPVLAIGSGGDYARSAALALYRNTDLSARQIVEEAMKIAGEICIYTNSNITIEEL.

Residue T7 is part of the active site. G162, C165, and T168 together coordinate Na(+).

Belongs to the peptidase T1B family. HslV subfamily. A double ring-shaped homohexamer of HslV is capped on each side by a ring-shaped HslU homohexamer. The assembly of the HslU/HslV complex is dependent on binding of ATP.

It localises to the cytoplasm. The catalysed reaction is ATP-dependent cleavage of peptide bonds with broad specificity.. Its activity is regulated as follows. Allosterically activated by HslU binding. Its function is as follows. Protease subunit of a proteasome-like degradation complex believed to be a general protein degrading machinery. This is ATP-dependent protease subunit HslV from Persephonella marina (strain DSM 14350 / EX-H1).